Consider the following 685-residue polypeptide: Putative lipase ROG1 (685 aa).

The active-site Charge relay system is the Ser-269.

Belongs to the putative lipase ROG1 family.

The polypeptide is Putative lipase ROG1 (ROG1) (Saccharomyces cerevisiae (strain ATCC 204508 / S288c) (Baker's yeast)).